The sequence spans 507 residues: Maturase K (507 aa).

It belongs to the intron maturase 2 family. MatK subfamily.

It localises to the plastid. It is found in the chloroplast. Its function is as follows. Usually encoded in the trnK tRNA gene intron. Probably assists in splicing its own and other chloroplast group II introns. The polypeptide is Maturase K (Calocedrus decurrens (California incense-cedar)).